A 673-amino-acid chain; its full sequence is F-box/LRR-repeat protein 17 (673 aa).

A disordered region spans residues 1–39; that stretch reads MGHVAPHASKKEHVAPHAAEKDHVAPHASKKEHVAPHAA. The span at 9–39 shows a compositional bias: basic and acidic residues; the sequence is SKKEHVAPHAAEKDHVAPHASKKEHVAPHAA. Residues 291–338 form the F-box domain; that stretch reads PLHINQLPSSLLLKIFSNLSLNERCILASLVCKYWRDLCLDSQFWKQL.

Belongs to the FBXL17 family. In terms of assembly, part of the SCF (SKP1-CUL1-F-box) E3 ubiquitin-protein ligase complex SCF(FBXL17). Interacts with BTB domain-containing proteins; specifically recognizes and binds a conserved degron of non-consecutive residues present at the interface of BTB dimers of aberrant composition. As to expression, expressed in the neuro-ectoderm of embryos.

The protein localises to the cytoplasm. The protein resides in the nucleus. Functionally, substrate-recognition component of the SCF(FBXL17) E3 ubiquitin ligase complex, a key component of a quality control pathway required to ensure functional dimerization of BTB domain-containing proteins (dimerization quality control, DQC). FBXL17 specifically recognizes and binds a conserved degron of non-consecutive residues present at the interface of BTB dimers of aberrant composition: aberrant BTB dimer are then ubiquitinated by the SCF(FBXL17) complex and degraded by the proteasome. The ability of the SCF(FBXL17) complex to eliminate compromised BTB dimers is required for the differentiation and survival of neural crest and neuronal cells. In Xenopus laevis (African clawed frog), this protein is F-box/LRR-repeat protein 17.